The primary structure comprises 368 residues: C2H2 type master regulator of conidiophore development BrlA (368 aa).

Residues Cys268–Phe292 form a C2H2-type 1; degenerate zinc finger. The C2H2-type 2 zinc-finger motif lies at Phe300 to His323. A disordered region spans residues Ala338 to Tyr368. Residues Lys359–Tyr368 show a composition bias toward basic and acidic residues.

Its subcellular location is the nucleus. BrlA, abaA and wetA are pivotal regulators of conidiophore development and conidium maturation. They act individually and together to regulate their own expression and that of numerous other sporulation-specific genes. BrlA, abaA and wetA act together to positively regulate the expression of the Pks1 gene cluster that mediates the biosynthesis of an anthraquinone derivative pigment that contributes to conidial pigmentation that provides protection from UV radiation, heat and cold stress. This chain is C2H2 type master regulator of conidiophore development BrlA, found in Metarhizium robertsii (strain ARSEF 23 / ATCC MYA-3075) (Metarhizium anisopliae (strain ARSEF 23)).